We begin with the raw amino-acid sequence, 329 residues long: Serpentine receptor class alpha-7 (329 aa).

The next 7 helical transmembrane spans lie at 25–45 (YVYL…VKIV), 57–77 (ILLF…LFSA), 104–124 (YLKV…GLLL), 143–163 (VGIA…KIII), 187–207 (RLFA…SVLL), 237–257 (TICF…FGIF), and 273–293 (FIVV…ILLV).

Belongs to the nematode receptor-like protein sra family.

The protein localises to the membrane. In Caenorhabditis elegans, this protein is Serpentine receptor class alpha-7 (sra-7).